The chain runs to 491 residues: Cobyric acid synthase (491 aa).

In terms of domain architecture, GATase cobBQ-type spans 258 to 445 (ALKVAVPVLG…MHGLFGADAF (188 aa)). The Nucleophile role is filled by C340. H437 is a catalytic residue.

It belongs to the CobB/CobQ family. CobQ subfamily.

It functions in the pathway cofactor biosynthesis; adenosylcobalamin biosynthesis. Catalyzes amidations at positions B, D, E, and G on adenosylcobyrinic A,C-diamide. NH(2) groups are provided by glutamine, and one molecule of ATP is hydrogenolyzed for each amidation. The polypeptide is Cobyric acid synthase (Mesorhizobium japonicum (strain LMG 29417 / CECT 9101 / MAFF 303099) (Mesorhizobium loti (strain MAFF 303099))).